The sequence spans 377 residues: Homocitrate synthase 1 (377 aa).

The region spanning 4-255 is the Pyruvate carboxyltransferase domain; the sequence is VLINDTTLRD…DMGIDTPRLL (252 aa).

Belongs to the alpha-IPM synthase/homocitrate synthase family.

The catalysed reaction is acetyl-CoA + 2-oxoglutarate + H2O = (2R)-homocitrate + CoA + H(+). Functionally, this protein is a Fe-Mo-cofactor biosynthetic component. The polypeptide is Homocitrate synthase 1 (nifV1) (Nostoc sp. (strain PCC 7120 / SAG 25.82 / UTEX 2576)).